Reading from the N-terminus, the 631-residue chain is 1,4-alpha-glucan branching enzyme GlgB (631 aa).

Asp309 serves as the catalytic Nucleophile. Residue Glu362 is the Proton donor of the active site.

This sequence belongs to the glycosyl hydrolase 13 family. GlgB subfamily. As to quaternary structure, monomer.

It carries out the reaction Transfers a segment of a (1-&gt;4)-alpha-D-glucan chain to a primary hydroxy group in a similar glucan chain.. Its pathway is glycan biosynthesis; glycogen biosynthesis. Catalyzes the formation of the alpha-1,6-glucosidic linkages in glycogen by scission of a 1,4-alpha-linked oligosaccharide from growing alpha-1,4-glucan chains and the subsequent attachment of the oligosaccharide to the alpha-1,6 position. The chain is 1,4-alpha-glucan branching enzyme GlgB from Marinobacter nauticus (strain ATCC 700491 / DSM 11845 / VT8) (Marinobacter aquaeolei).